The sequence spans 442 residues: F-box/kelch-repeat protein OR23 (442 aa).

An F-box domain is found at Thr-37–Ser-84. Kelch repeat units lie at residues Leu-93–Ala-139, Tyr-145–Gly-200, Arg-204–Asn-257, Glu-269–Ala-328, Asp-330–Gly-377, and Leu-390–Met-437.

The polypeptide is F-box/kelch-repeat protein OR23 (OR23) (Arabidopsis thaliana (Mouse-ear cress)).